The sequence spans 284 residues: L-ribulose-5-phosphate 3-epimerase UlaE (284 aa).

It belongs to the L-ribulose-5-phosphate 3-epimerase family.

The enzyme catalyses L-ribulose 5-phosphate = L-xylulose 5-phosphate. It participates in cofactor degradation; L-ascorbate degradation; D-xylulose 5-phosphate from L-ascorbate: step 3/4. In terms of biological role, catalyzes the isomerization of L-xylulose-5-phosphate to L-ribulose-5-phosphate. Is involved in the anaerobic L-ascorbate utilization. This is L-ribulose-5-phosphate 3-epimerase UlaE from Salmonella typhimurium (strain LT2 / SGSC1412 / ATCC 700720).